Consider the following 193-residue polypeptide: uncharacterized protein (193 aa).

The chain crosses the membrane as a helical span at residues 153 to 170 (WRYWAVIALIAAVLIYLY).

The protein resides in the membrane. This is an uncharacterized protein from Invertebrate iridescent virus 6 (IIV-6).